The chain runs to 87 residues: uncharacterized protein (87 aa).

This is an uncharacterized protein from Autographa californica nuclear polyhedrosis virus (AcMNPV).